Consider the following 276-residue polypeptide: MSTGNVTTLRRPEAPPSLPAGTEAKIEHHARPAEGKVAFSFRNVTKSFGDKPVLRGIDLDVREGEFLAVIGKSGCGKSTLLRILAGLDTPTTGTVSKDPSNRTRMMFQEPRLLPWERIANNVSVGLTGIAKGEAAREQALGILDEVGLKDRAGEWPYVLSGGQKQRVALARALVAHPQILALDEPLGALDALTRIEMQLLLERIWRKQKFTAVLVTHDVSEAVALADRIVVIDEGRIALDLDVKLPRPRRHGTPEFARLEEQVLNQLFGRGDITGQ.

The tract at residues 1–21 (MSTGNVTTLRRPEAPPSLPAG) is disordered. Residues 39–259 (FSFRNVTKSF…RHGTPEFARL (221 aa)) form the ABC transporter domain. Position 71–78 (71–78 (GKSGCGKS)) interacts with ATP.

The protein belongs to the ABC transporter superfamily. Aliphatic sulfonates importer (TC 3.A.1.17.2) family. The complex is composed of two ATP-binding proteins (SsuB), two transmembrane proteins (SsuC) and a solute-binding protein (SsuA).

Its subcellular location is the cell inner membrane. It catalyses the reaction ATP + H2O + aliphatic sulfonate-[sulfonate-binding protein]Side 1 = ADP + phosphate + aliphatic sulfonateSide 2 + [sulfonate-binding protein]Side 1.. Its function is as follows. Part of the ABC transporter complex SsuABC involved in aliphatic sulfonates import. Responsible for energy coupling to the transport system. The sequence is that of Aliphatic sulfonates import ATP-binding protein SsuB 1 from Agrobacterium fabrum (strain C58 / ATCC 33970) (Agrobacterium tumefaciens (strain C58)).